Here is an 80-residue protein sequence, read N- to C-terminus: MSCCGGNCGCGSGCKCGNGCGGCKMYPDLGFSGESTTTETFVFGVAPAMKNQYEASGEGVAENDACKCGSDCKCDPCTCK.

Belongs to the metallothionein superfamily. Type 15 family.

In terms of biological role, metallothioneins have a high content of cysteine residues that bind various heavy metals. This Brassica campestris (Field mustard) protein is Metallothionein-like protein type 2.